The sequence spans 509 residues: Maturase K (509 aa).

It belongs to the intron maturase 2 family. MatK subfamily.

Its subcellular location is the plastid. It is found in the chloroplast. In terms of biological role, usually encoded in the trnK tRNA gene intron. Probably assists in splicing its own and other chloroplast group II introns. This chain is Maturase K, found in Solanum tuberosum (Potato).